A 282-amino-acid polypeptide reads, in one-letter code: Chromatin modification-related protein YNG2 (282 aa).

Residues 35 to 86 (LIEEKKKYEQKESQIHKFIRQQGSIPKHPQEDGLDKEIKESLLKCQSLQREK) adopt a coiled-coil conformation. Residues 123 to 217 (DGDMDSAAEA…KGQNGSPENE (95 aa)) form a disordered region. The segment covering 129–143 (AAEASRESSVVSNSS) has biased composition (low complexity). Residue Ser-183 is modified to Phosphoserine. Thr-185 bears the Phosphothreonine mark. Residue Ser-188 is modified to Phosphoserine. Over residues 191-203 (IEKKIARTKEFKN) the composition is skewed to basic and acidic residues. A compositionally biased stretch (polar residues) spans 204 to 214 (SRNGKGQNGSP). The PHD-type zinc-finger motif lies at 222-271 (TLYCFCQRVSFGEMVACDGPNCKYEWFHYDCVNLKEPPKGTWYCPECKIE). Positions 225, 227, 238, 243, 249, 252, 265, and 268 each coordinate Zn(2+).

It belongs to the ING family. Interacts with H3K4me3 and to a lesser extent with H3K4me2. Component of the NuA4 histone acetyltransferase complex composed of at least ACT1, ARP4, YAF9, VID21, SWC4, EAF3, EAF5, EAF6, EAF7, EPL1, ESA1, TRA1 and YNG2.

It localises to the nucleus. Component of the NuA4 histone acetyltransferase complex which is involved in transcriptional activation of selected genes principally by acetylation of nucleosomal histone H4 and H2A. The NuA4 complex is also involved in DNA repair. Involved in cell cycle progression and meiosis. This is Chromatin modification-related protein YNG2 (YNG2) from Saccharomyces cerevisiae (strain ATCC 204508 / S288c) (Baker's yeast).